We begin with the raw amino-acid sequence, 490 residues long: Cysteine--tRNA ligase (490 aa).

Position 36 (Cys36) interacts with Zn(2+). Residues 38–48 carry the 'HIGH' region motif; it reads VTVYDYSHIGH. Residues Cys216, His241, and Glu245 each coordinate Zn(2+). A 'KMSKS' region motif is present at residues 278 to 282; sequence KMSKS. Lys281 serves as a coordination point for ATP.

It belongs to the class-I aminoacyl-tRNA synthetase family. In terms of assembly, monomer. Zn(2+) serves as cofactor.

It is found in the cytoplasm. It carries out the reaction tRNA(Cys) + L-cysteine + ATP = L-cysteinyl-tRNA(Cys) + AMP + diphosphate. This Magnetococcus marinus (strain ATCC BAA-1437 / JCM 17883 / MC-1) protein is Cysteine--tRNA ligase.